The sequence spans 260 residues: 3-alpha-(or 20-beta)-hydroxysteroid dehydrogenase (260 aa).

Residues Arg17, Met19, Asp38, Asp61, Val62, Asn88, Tyr153, Lys157, Val186, Thr188, and Thr191 each contribute to the NAD(+) site. Tyr153 serves as the catalytic Proton acceptor.

The protein belongs to the short-chain dehydrogenases/reductases (SDR) family. As to quaternary structure, homotetramer.

The enzyme catalyses androstan-3alpha,17beta-diol + NAD(+) = 17beta-hydroxyandrostanone + NADH + H(+). Its pathway is lipid metabolism; steroid degradation. Functionally, probably involved in steroid metabolism. This Mycobacterium tuberculosis (strain CDC 1551 / Oshkosh) protein is 3-alpha-(or 20-beta)-hydroxysteroid dehydrogenase (fabG3).